A 502-amino-acid polypeptide reads, in one-letter code: 2-isopropylmalate synthase (502 aa).

Mn(2+)-binding residues include aspartate 1, histidine 189, histidine 191, and asparagine 225. The 254-residue stretch at 1–254 (DGEQALQASL…STNINHKEIY (254 aa)) folds into the Pyruvate carboxyltransferase domain. The tract at residues 379–502 (CLKFFSVQSI…VNKNLKNLKK (124 aa)) is regulatory domain.

The protein belongs to the alpha-IPM synthase/homocitrate synthase family. LeuA type 1 subfamily. Homodimer. Requires Mn(2+) as cofactor.

The protein resides in the cytoplasm. The enzyme catalyses 3-methyl-2-oxobutanoate + acetyl-CoA + H2O = (2S)-2-isopropylmalate + CoA + H(+). The protein operates within amino-acid biosynthesis; L-leucine biosynthesis; L-leucine from 3-methyl-2-oxobutanoate: step 1/4. Its function is as follows. Catalyzes the condensation of the acetyl group of acetyl-CoA with 3-methyl-2-oxobutanoate (2-ketoisovalerate) to form 3-carboxy-3-hydroxy-4-methylpentanoate (2-isopropylmalate). The protein is 2-isopropylmalate synthase of Buchnera aphidicola subsp. Uroleucon sonchi.